The following is a 160-amino-acid chain: Phosphopantetheine adenylyltransferase (160 aa).

Serine 10 is a substrate binding site. ATP-binding positions include 10-11 and histidine 18; that span reads SF. Lysine 42, threonine 74, and arginine 88 together coordinate substrate. Residues 89–91, glutamate 99, and 124–130 each bind ATP; these read GLR and YSFISST.

This sequence belongs to the bacterial CoaD family. As to quaternary structure, homohexamer. The cofactor is Mg(2+).

The protein localises to the cytoplasm. The catalysed reaction is (R)-4'-phosphopantetheine + ATP + H(+) = 3'-dephospho-CoA + diphosphate. It functions in the pathway cofactor biosynthesis; coenzyme A biosynthesis; CoA from (R)-pantothenate: step 4/5. In terms of biological role, reversibly transfers an adenylyl group from ATP to 4'-phosphopantetheine, yielding dephospho-CoA (dPCoA) and pyrophosphate. This Leptospira interrogans serogroup Icterohaemorrhagiae serovar copenhageni (strain Fiocruz L1-130) protein is Phosphopantetheine adenylyltransferase.